Reading from the N-terminus, the 591-residue chain is Aspartate--tRNA ligase (591 aa).

Glu-176 is a binding site for L-aspartate. The interval 200–203 (QILK) is aspartate. Residue Arg-222 participates in L-aspartate binding. ATP-binding positions include 222-224 (RDE) and Gln-231. His-450 provides a ligand contact to L-aspartate. An ATP-binding site is contributed by Glu-484. Arg-491 contacts L-aspartate. 536 to 539 (GLDR) is a binding site for ATP.

The protein belongs to the class-II aminoacyl-tRNA synthetase family. Type 1 subfamily. In terms of assembly, homodimer.

It is found in the cytoplasm. The catalysed reaction is tRNA(Asp) + L-aspartate + ATP = L-aspartyl-tRNA(Asp) + AMP + diphosphate. In terms of biological role, catalyzes the attachment of L-aspartate to tRNA(Asp) in a two-step reaction: L-aspartate is first activated by ATP to form Asp-AMP and then transferred to the acceptor end of tRNA(Asp). The polypeptide is Aspartate--tRNA ligase (Listeria welshimeri serovar 6b (strain ATCC 35897 / DSM 20650 / CCUG 15529 / CIP 8149 / NCTC 11857 / SLCC 5334 / V8)).